Reading from the N-terminus, the 327-residue chain is 1-aminocyclopropane-1-carboxylate oxidase 1 (327 aa).

The region spanning 157-257 (PTFGTKVSNY…RMSIASFYNP (101 aa)) is the Fe2OG dioxygenase domain. Residues His-181, Asp-183, and His-238 each coordinate Fe cation.

This sequence belongs to the iron/ascorbate-dependent oxidoreductase family. The cofactor is Fe cation.

It carries out the reaction 1-aminocyclopropane-1-carboxylate + L-ascorbate + O2 = ethene + L-dehydroascorbate + hydrogen cyanide + CO2 + 2 H2O. Its pathway is alkene biosynthesis; ethylene biosynthesis via S-adenosyl-L-methionine; ethylene from S-adenosyl-L-methionine: step 2/2. The sequence is that of 1-aminocyclopropane-1-carboxylate oxidase 1 (ACO1) from Doritaenopsis sp. (Moth orchid).